The following is a 238-amino-acid chain: Demethylmenaquinone methyltransferase (238 aa).

S-adenosyl-L-methionine is bound by residues threonine 60, aspartate 81, and 108-109; that span reads NA.

Belongs to the class I-like SAM-binding methyltransferase superfamily. MenG/UbiE family.

It carries out the reaction a 2-demethylmenaquinol + S-adenosyl-L-methionine = a menaquinol + S-adenosyl-L-homocysteine + H(+). The protein operates within quinol/quinone metabolism; menaquinone biosynthesis; menaquinol from 1,4-dihydroxy-2-naphthoate: step 2/2. Methyltransferase required for the conversion of demethylmenaquinol (DMKH2) to menaquinol (MKH2). This chain is Demethylmenaquinone methyltransferase, found in Oceanobacillus iheyensis (strain DSM 14371 / CIP 107618 / JCM 11309 / KCTC 3954 / HTE831).